The primary structure comprises 1198 residues: Potassium/sodium hyperpolarization-activated cyclic nucleotide-gated channel 4 (1198 aa).

Residues 1–266 are Cytoplasmic-facing; it reads MDKLPPSMRK…PYSDFRFYWD (266 aa). The disordered stretch occupies residues 25 to 183; the sequence is IMDEEEDGEE…PASASCEQPS (159 aa). The segment covering 26–36 has biased composition (acidic residues); that stretch reads MDEEEDGEEEG. Gly residues predominate over residues 105–118; that stretch reads SRGGGSGGAGGGSS. Residues 121-132 show a composition bias toward basic and acidic residues; it reads HLHDSAEERRLI. Serine 139 carries the post-translational modification Phosphoserine. Residues 164–174 are compositionally biased toward pro residues; sequence ASPPPQQPPQP. Positions 209–260 are involved in subunit assembly; the sequence is GQSGFMQRQFGAMLQPGVNKFSLRMFGSQKAVEREQERVKSAGFWIIHPYSD. A helical transmembrane segment spans residues 267–287; that stretch reads LTMLLLMVGNLIIIPVGITFF. At 288–293 the chain is on the extracellular side; the sequence is KDENTT. Residues 294–314 form a helical membrane-spanning segment; that stretch reads PWIVFNVVSDTFFLIDLVLNF. Topologically, residues 315-340 are cytoplasmic; sequence RTGIVVEDNTEIILDPQRIKMKYLKS. Residues 341–361 traverse the membrane as a helical segment; the sequence is WFVVDFISSIPVDYIFLIVET. Residues 362–368 are Extracellular-facing; the sequence is RIDSEVY. Residues 369-389 traverse the membrane as a helical; Voltage-sensor segment; it reads KTARALRIVRFTKILSLLRLL. At 390–420 the chain is on the cytoplasmic side; that stretch reads RLSRLIRYIHQWEEIFHMTYDLASAVVRIVN. Residues 421 to 441 form a helical membrane-spanning segment; the sequence is LIGMMLLLCHWDGCLQFLVPM. At 442–464 the chain is on the extracellular side; that stretch reads LQDFPHDCWVSINGMVNNSWGKQ. The N-linked (GlcNAc...) asparagine glycan is linked to asparagine 458. The segment at residues 465–486 is an intramembrane region (pore-forming); sequence YSYALFKAMSHMLCIGYGRQAP. Residues 487–496 lie on the Extracellular side of the membrane; it reads VGMSDVWLTM. The chain crosses the membrane as a helical span at residues 497-517; the sequence is LSMIVGATCYAMFIGHATALI. Residues 518-1198 lie on the Cytoplasmic side of the membrane; the sequence is QSLDSSRRQY…PVRSKLPSNL (681 aa). The 3',5'-cyclic GMP site is built by tyrosine 559, lysine 562, phenylalanine 564, and glutamate 566. 3',5'-cyclic AMP-binding residues include glycine 659, glutamate 660, cysteine 662, arginine 669, threonine 670, valine 673, and arginine 710. The disordered stretch occupies residues 804–1198; sequence AIFRPPPGPG…PVRSKLPSNL (395 aa). Low complexity-rich tracts occupy residues 831-856 and 866-880; these read SLIP…SSSS and SAPP…SSSS. The segment covering 881 to 894 has biased composition (pro residues); sequence SPPPGACSSPPAPT. Composition is skewed to low complexity over residues 895–905, 913–937, and 965–985; these read PSTSTAATTTG, LGGS…SPQA, and RSPS…SPGL. Pro residues predominate over residues 1027-1040; it reads GHSPGPPRTFPSAP. Positions 1043-1054 are enriched in low complexity; the sequence is ASGSHGSLLLPP. Residues serine 1103 and serine 1106 each carry the phosphoserine modification. A compositionally biased stretch (gly residues) spans 1120–1132; that stretch reads AGGGSGSSGGLGP.

This sequence belongs to the potassium channel HCN family. As to quaternary structure, homotetramer. The potassium channel is composed of a homo- or heterotetrameric complex of pore-forming subunits. Interacts with PEX5L with a 4:4 HCN4:PEX5L stoichiometry; reduces the effects of cAMP on the voltage-dependence and rate of activation. Interacts with IRAG1; regulates HCN4 channel activity. Interacts with IRAG2; regulates HCN4 channel activity. S-palmitoylated. In terms of tissue distribution, highly expressed in pyramidal and granule layer of the hippocampus, in thalamus anterior nucleus, in the supraoptic nucleus in hypothalamus, in cerebellum, and in trapezoid nuclei and superior olivary complex in the auditory system. Detected in a subset of elongated cells in taste buds.

It localises to the cell membrane. The catalysed reaction is K(+)(in) = K(+)(out). The enzyme catalyses Na(+)(in) = Na(+)(out). Its activity is regulated as follows. Activated by cAMP and at 100 times higher concentrationsand to a lesser extent by cGMP and cCMP. cAMP binding causes a conformation change that leads to the assembly of an active tetramer and channel opening. Binding of cAMP removes a tonic inhibition conferred by cyclic nucleotide-binding domain (CNBD) on channel opening. Cyclic dinucleotides can modulate HCN4 channel; cyclic dinucleotides acting as potent antagonists of cAMP. Inhibited by extracellular Cs(+) ions. Auxiliary subunits can also regulate HCN4 channel. IRAG1 causes a gain-of-function by shifting HCN4 activation to more depolarized membrane potentials in the absence of cAMP. In contrast, IRAG2 causes a loss-of-function by inhibiting cAMP-dependent potentiation of HCN4 activation. Hyperpolarization-activated ion channel that are permeable to Na(+) and K(+) ions with very slow activation and inactivation. Exhibits higher selectivity for K(+) over Na(+) ions. Contributes to the native pacemaker currents in heart (If) that regulate the rhythm of heart beat. Contributes to the native pacemaker currents in neurons (Ih). May mediate responses to sour stimuli. This is Potassium/sodium hyperpolarization-activated cyclic nucleotide-gated channel 4 (Hcn4) from Rattus norvegicus (Rat).